A 268-amino-acid polypeptide reads, in one-letter code: Movement protein (268 aa).

Residues 216 to 238 (KKSDVRKGKNSSSVRSVPNKNYR) are disordered. The span at 225 to 237 (NSSSVRSVPNKNY) shows a compositional bias: polar residues.

Belongs to the tobamovirus movement protein family. As to quaternary structure, binds to host RBCS at the plasmodesmata; this interaction seems required for viral systemic movement. In resistant plants, interacts with host MBP2C at host microtubules; this interaction prevents virus cell to cell movement. In resistant plants, interacts with host resistance (R) protein (e.g. tomato ToMV resistance protein TM-2(2), AC Q71BG9) at the host plasma membrane; this interaction triggers host defense responses leading to programmed cell death.

Its subcellular location is the host cytoplasm. The protein resides in the host cytoskeleton. It localises to the host cell junction. It is found in the host plasmodesma. Transports viral genome to neighboring plant cells directly through plasmosdesmata, without any budding. The movement protein allows efficient cell to cell propagation, by bypassing the host cell wall barrier. Forms a ribonucleoprotein complex with viral RNA. Binds microtubules and modulates microtubule stability. Can bind double-stranded DNA. Triggers host hypersensitive defense reaction in incompatible plants harboring resistance (R) proteins. This Nicotiana tabacum (Common tobacco) protein is Movement protein (MP).